The following is a 244-amino-acid chain: Adiponectin (244 aa).

The first 18 residues, Met1–Gln18, serve as a signal peptide directing secretion. 2 O-linked (GalNAc...) threonine glycosylation sites follow: Thr21 and Thr22. The residue at position 33 (Lys33) is a 5-hydroxylysine. S-(2-succinyl)cysteine is present on Cys36. Positions Met40–Lys101 are disordered. A Collagen-like domain is found at Gly42 to Gly107. A 4-hydroxyproline mark is found at Pro44, Pro47, and Pro53. Over residues Arg55–Asp70 the composition is skewed to basic and acidic residues. Lys65 and Lys68 each carry 5-hydroxylysine. O-linked (Gal...) hydroxylysine; partial glycans are attached at residues Lys65 and Lys68. 2 positions are modified to 4-hydroxyproline; partial: Pro71 and Pro76. A 5-hydroxylysine modification is found at Lys77. An O-linked (Gal...) hydroxylysine; partial glycan is attached at Lys77. Residue Pro91 is modified to 4-hydroxyproline. Pro95 carries the 4-hydroxyproline; partial modification. Lys101 carries the 5-hydroxylysine modification. The O-linked (Gal...) hydroxylysine; partial glycan is linked to Lys101. In terms of domain architecture, C1q spans Ala108–Asn244.

As to quaternary structure, homomultimer. Forms trimers, hexamers and 12- to 18-mers. The trimers (low molecular weight complexes / LMW) are assembled via non-covalent interactions of the collagen-like domains in a triple helix and hydrophobic interactions within the globular C1q domain. Several trimers can associate to form disulfide-linked hexamers (middle molecular weight complexes / MMW) and larger complexes (higher molecular weight / HMW). The HMW-complex assembly is also modulated by the degree of lysine hydroxylation and glycosylation. LMW, MMW and HMW complexes bind to HBEGF, MMW and HMW complexes bind to PDGFB, and HMW complex binds to FGF2. Interacts with CTRP9 via the C1q domain (heterotrimeric complex). Post-translationally, HMW complexes are more extensively glycosylated than smaller oligomers. Hydroxylation and glycosylation of the lysine residues within the collagen-like domain of adiponectin seem to be critically involved in regulating the formation and/or secretion of HMW complexes and consequently contribute to the insulin-sensitizing activity of adiponectin in hepatocytes. O-glycosylated. Not N-glycosylated. O-linked glycans on hydroxylysines consist of Glc-Gal disaccharides bound to the oxygen atom of post-translationally added hydroxyl groups. Sialylated to varying degrees depending on tissue. Thr-22 appears to be the major site of sialylation. Higher sialylation found in SGBS adipocytes than in HEK fibroblasts. Sialylation is not required neither for heterodimerization nor for secretion. Not sialylated on the glycosylated hydroxylysines. Desialylated forms are rapidly cleared from the circulation. In terms of processing, succination of Cys-36 by the Krebs cycle intermediate fumarate, which leads to S-(2-succinyl)cysteine residues, inhibits polymerization and secretion of adiponectin. Adiponectin is a major target for succination in both adipocytes and adipose tissue of diabetic mammals. It was proposed that succination of proteins is a biomarker of mitochondrial stress and accumulation of Krebs cycle intermediates in adipose tissue in diabetes and that succination of adiponectin may contribute to the decrease in plasma adiponectin in diabetes. As to expression, synthesized exclusively by adipocytes and secreted into plasma.

It localises to the secreted. Polymerization and secretion of adiponectin is inhibited by succination of cysteine residues by the Krebs cycle intermediate fumarate, which leads to S-(2-succinyl)cysteine residues. In terms of biological role, important adipokine involved in the control of fat metabolism and insulin sensitivity, with direct anti-diabetic, anti-atherogenic and anti-inflammatory activities. Stimulates AMPK phosphorylation and activation in the liver and the skeletal muscle, enhancing glucose utilization and fatty-acid combustion. Antagonizes TNF-alpha by negatively regulating its expression in various tissues such as liver and macrophages, and also by counteracting its effects. Inhibits endothelial NF-kappa-B signaling through a cAMP-dependent pathway. May play a role in cell growth, angiogenesis and tissue remodeling by binding and sequestering various growth factors with distinct binding affinities, depending on the type of complex, LMW, MMW or HMW. The chain is Adiponectin (ADIPOQ) from Homo sapiens (Human).